Here is a 188-residue protein sequence, read N- to C-terminus: ATP synthase subunit b 2 (188 aa).

The interval 1–23 (MAEGHGDANGATAHTAADGGHKA) is disordered. A compositionally biased stretch (low complexity) spans 8-18 (ANGATAHTAAD). Residues 37–57 (LVSLLIAFVALYLIVSKIALP) form a helical membrane-spanning segment.

This sequence belongs to the ATPase B chain family. F-type ATPases have 2 components, F(1) - the catalytic core - and F(0) - the membrane proton channel. F(1) has five subunits: alpha(3), beta(3), gamma(1), delta(1), epsilon(1). F(0) has three main subunits: a(1), b(2) and c(10-14). The alpha and beta chains form an alternating ring which encloses part of the gamma chain. F(1) is attached to F(0) by a central stalk formed by the gamma and epsilon chains, while a peripheral stalk is formed by the delta and b chains.

Its subcellular location is the cell inner membrane. Its function is as follows. F(1)F(0) ATP synthase produces ATP from ADP in the presence of a proton or sodium gradient. F-type ATPases consist of two structural domains, F(1) containing the extramembraneous catalytic core and F(0) containing the membrane proton channel, linked together by a central stalk and a peripheral stalk. During catalysis, ATP synthesis in the catalytic domain of F(1) is coupled via a rotary mechanism of the central stalk subunits to proton translocation. Component of the F(0) channel, it forms part of the peripheral stalk, linking F(1) to F(0). The b'-subunit is a diverged and duplicated form of b found in plants and photosynthetic bacteria. The protein is ATP synthase subunit b 2 (atpF2) of Rhodopseudomonas palustris (strain BisB18).